Consider the following 391-residue polypeptide: Succinyl-diaminopimelate desuccinylase (391 aa).

Residue His-67 coordinates Zn(2+). Asp-69 is a catalytic residue. Zn(2+) is bound at residue Asp-101. Glu-135 acts as the Proton acceptor in catalysis. Positions 136, 164, and 353 each coordinate Zn(2+).

This sequence belongs to the peptidase M20A family. DapE subfamily. In terms of assembly, homodimer. Zn(2+) is required as a cofactor. Requires Co(2+) as cofactor.

The catalysed reaction is N-succinyl-(2S,6S)-2,6-diaminopimelate + H2O = (2S,6S)-2,6-diaminopimelate + succinate. The protein operates within amino-acid biosynthesis; L-lysine biosynthesis via DAP pathway; LL-2,6-diaminopimelate from (S)-tetrahydrodipicolinate (succinylase route): step 3/3. Catalyzes the hydrolysis of N-succinyl-L,L-diaminopimelic acid (SDAP), forming succinate and LL-2,6-diaminopimelate (DAP), an intermediate involved in the bacterial biosynthesis of lysine and meso-diaminopimelic acid, an essential component of bacterial cell walls. The protein is Succinyl-diaminopimelate desuccinylase of Rickettsia bellii (strain OSU 85-389).